We begin with the raw amino-acid sequence, 372 residues long: Alanine dehydrogenase 2 (372 aa).

Histidine 95 is a catalytic residue. Residue 169 to 199 participates in NAD(+) binding; the sequence is KVTIIGGGQAGTNAAKIALGLGADVTILDVN.

The protein belongs to the AlaDH/PNT family.

It carries out the reaction L-alanine + NAD(+) + H2O = pyruvate + NH4(+) + NADH + H(+). Its pathway is amino-acid degradation; L-alanine degradation via dehydrogenase pathway; NH(3) and pyruvate from L-alanine: step 1/1. Functionally, may play a role in cell wall synthesis as L-alanine is an important constituent of the peptidoglycan layer. The protein is Alanine dehydrogenase 2 (ald2) of Staphylococcus aureus (strain N315).